Reading from the N-terminus, the 469-residue chain is uncharacterized protein (469 aa).

Positions 203-244 (ACPVPPQGHASSAADQAGVPERGRKRAHEGPGAGEAASAGRG) are disordered.

It belongs to the epstein-barr virus LF1 family.

This is an uncharacterized protein from Homo sapiens (Human).